Reading from the N-terminus, the 273-residue chain is Large ribosomal subunit protein uL2 (273 aa).

Residues R221–K273 form a disordered region. A compositionally biased stretch (basic residues) spans K253–K273.

It belongs to the universal ribosomal protein uL2 family. As to quaternary structure, part of the 50S ribosomal subunit. Forms a bridge to the 30S subunit in the 70S ribosome.

One of the primary rRNA binding proteins. Required for association of the 30S and 50S subunits to form the 70S ribosome, for tRNA binding and peptide bond formation. It has been suggested to have peptidyltransferase activity; this is somewhat controversial. Makes several contacts with the 16S rRNA in the 70S ribosome. This Mannheimia succiniciproducens (strain KCTC 0769BP / MBEL55E) protein is Large ribosomal subunit protein uL2.